The chain runs to 334 residues: MPSASKNFRLQSKYVFLTYPKCSSQRDDLFQFLWEKLTPFLIFFLGVASELHQDGTTHYHALIQLDKKPCIRDPSFFDFEGNHPNIQPARNSKQVLDYISKDGDIKTRGDFRDHKVSPRKSDARWRTIIQTATSKEEYLDMIKEEFPHEWATKLQWLEYSANKLFPPQPEQYVSPFTESDLRCHEDLHNWRETHLYHDEGRTGVRHPSLYICGPTRTGKTTWARSLGRHNYWNGTIDFTNYDEHATYNIIDDIPFKFVPLWKQLIGCQSDFTVNPKYGKKKKIKGGIPSIILCNPDEDWMLSMTSQQKDYFEDNCVTHYMCDGETFFARESSSH.

The CRESS-DNA virus Rep endonuclease domain occupies 9–111 (RLQSKYVFLT…DGDIKTRGDF (103 aa)). The RCR-1 motif lies at 16 to 19 (FLTY). Residues E50, H58, and H60 each contribute to the a divalent metal cation site. The RCR-2 signature appears at 58–60 (HYH). Y98 (for DNA cleavage activity) is an active-site residue. Positions 98 to 101 (YISK) match the RCR-3 motif. D102 contacts a divalent metal cation. An oligomerization region spans residues 160–172 (SANKLFPPQPEQY). 213–220 (GPTRTGKT) is an ATP binding site. Positions 236–254 (IDFTNYDEHATYNIIDDIP) are transactivation. A Nuclear localization signal motif is present at residues 276–286 (KYGKKKKIKGG).

Belongs to the geminiviridae Rep protein family. Homooligomer. Rep binds to repeated DNA motifs (iterons). Forms the O-complex, which is a Rep-DNA complex involved in the initiation of RCR. Part of the C- and V-complexes which are RepA-Rep-DNA complexes involved in the c-sense and v-sense transcription. Requires Mg(2+) as cofactor. It depends on Mn(2+) as a cofactor.

Its subcellular location is the host nucleus. Its function is as follows. Essential for the replication of viral ssDNA. The closed circular ssDNA genome is first converted to a superhelical dsDNA. Rep binds a specific region at the genome origin of replication. It introduces an endonucleolytic nick within the conserved sequence 5'-TAATATTAC-3' in the intergenic region of the genome present in all geminiviruses, thereby initiating the rolling circle replication (RCR). Following cleavage, binds covalently to the 5'-phosphate of DNA as a tyrosyl ester. The cleavage gives rise to a free 3'-OH that serves as a primer for the cellular DNA polymerase. The polymerase synthesizes the (+) strand DNA by rolling circle mechanism. After one round of replication, a Rep-catalyzed nucleotidyl transfer reaction releases a circular single-stranded virus genome, thereby terminating the replication. Displays origin-specific DNA cleavage, nucleotidyl transferase, ATPase and helicase activities. Acts a an inhibitor of C-sense gene transcription. In Phaseolus vulgaris (Kidney bean), this protein is Replication-associated protein.